The chain runs to 99 residues: MLGMIRWVVEGTLVAMLLSAIRRETGMIFFYNQYQLGGWIHRYLSWGEMCYTRTLKMVKRSKFFRKQLNEDGFGRINDSGPKRRGRDQSQYSSRFVELD.

The first 19 residues, methionine 1–serine 19, serve as a signal peptide directing secretion. A disordered region spans residues aspartate 71–aspartate 99.

Its subcellular location is the cytoplasm. This is an uncharacterized protein from Saccharomyces cerevisiae (strain ATCC 204508 / S288c) (Baker's yeast).